A 78-amino-acid polypeptide reads, in one-letter code: UPF0349 protein GK2958 (78 aa).

It belongs to the UPF0349 family.

This chain is UPF0349 protein GK2958, found in Geobacillus kaustophilus (strain HTA426).